The primary structure comprises 267 residues: Shikimate dehydrogenase (NADP(+)) (267 aa).

Shikimate-binding positions include 14–16 and threonine 61; that span reads SLS. Lysine 65 serves as the catalytic Proton acceptor. 2 residues coordinate shikimate: asparagine 86 and aspartate 101. NADP(+) contacts are provided by residues 126–130, 150–155, and leucine 213; these read GAGGA and NRTPFK. A shikimate-binding site is contributed by tyrosine 215. Residue glycine 236 coordinates NADP(+).

Belongs to the shikimate dehydrogenase family. In terms of assembly, homodimer.

It carries out the reaction shikimate + NADP(+) = 3-dehydroshikimate + NADPH + H(+). The protein operates within metabolic intermediate biosynthesis; chorismate biosynthesis; chorismate from D-erythrose 4-phosphate and phosphoenolpyruvate: step 4/7. Involved in the biosynthesis of the chorismate, which leads to the biosynthesis of aromatic amino acids. Catalyzes the reversible NADPH linked reduction of 3-dehydroshikimate (DHSA) to yield shikimate (SA). This chain is Shikimate dehydrogenase (NADP(+)), found in Ruthia magnifica subsp. Calyptogena magnifica.